The following is a 472-amino-acid chain: Nuclear receptor subfamily 0 group B member 1 (472 aa).

A run of 3 repeats spans residues M1–C67, F68–C135, and F136–Y202. The interval M1–V255 is 4 X 67 AA tandem repeats. 3 consecutive short sequence motifs (LXXLL motif) follow at residues L13–L17, L80–L84, and L148–L152. The 282-residue stretch at Q190–K471 folds into the NR LBD domain. One copy of the 4; truncated repeat lies at V203 to V255. 2 disordered regions span residues V214–W237 and R326–Q345. Residues M463–L468 carry the AF-2 motif motif.

This sequence belongs to the nuclear hormone receptor family. NR0 subfamily. In terms of assembly, homodimer. Interacts with NR5A1, NR5A2, NR0B2 and with COPS2. Interacts with ESRRB; represses ESRRB activity at the GATA6 promoter.

The protein localises to the nucleus. The protein resides in the cytoplasm. Functionally, nuclear receptor that lacks a DNA-binding domain and acts as a corepressor that inhibits the transcriptional activity of other nuclear receptors through heterodimeric interactions. Component of a cascade required for the development of the hypothalamic-pituitary-adrenal-gonadal axis. May also have a role in the development of the embryo and in the maintenance of embryonic stem cell pluripotency. The polypeptide is Nuclear receptor subfamily 0 group B member 1 (Nr0b1) (Rattus norvegicus (Rat)).